The sequence spans 78 residues: RNA-binding protein Hfq (78 aa).

Positions 10-69 (DPFLNALRREHVPVSIYLVNGIKLQGQVESFDQYVVLLKNTVTQMVYKHAISTVVPARPV) constitute a Sm domain.

Belongs to the Hfq family. Homohexamer.

In terms of biological role, RNA chaperone that binds small regulatory RNA (sRNAs) and mRNAs to facilitate mRNA translational regulation in response to envelope stress, environmental stress and changes in metabolite concentrations. Also binds with high specificity to tRNAs. In Dechloromonas aromatica (strain RCB), this protein is RNA-binding protein Hfq.